Here is a 234-residue protein sequence, read N- to C-terminus: DNA repair protein RecO (234 aa).

The protein belongs to the RecO family.

In terms of biological role, involved in DNA repair and RecF pathway recombination. The chain is DNA repair protein RecO from Halorhodospira halophila (strain DSM 244 / SL1) (Ectothiorhodospira halophila (strain DSM 244 / SL1)).